Reading from the N-terminus, the 503-residue chain is ATP synthase subunit alpha (503 aa).

171-178 (DRQTGKTA) is a binding site for ATP.

Belongs to the ATPase alpha/beta chains family. F-type ATPases have 2 components, CF(1) - the catalytic core - and CF(0) - the membrane proton channel. CF(1) has five subunits: alpha(3), beta(3), gamma(1), delta(1), epsilon(1). CF(0) has four main subunits: a(1), b(1), b'(1) and c(9-12).

It is found in the cellular thylakoid membrane. The catalysed reaction is ATP + H2O + 4 H(+)(in) = ADP + phosphate + 5 H(+)(out). Functionally, produces ATP from ADP in the presence of a proton gradient across the membrane. The alpha chain is a regulatory subunit. This chain is ATP synthase subunit alpha, found in Synechococcus sp. (strain PCC 6716).